The chain runs to 180 residues: NADH-quinone oxidoreductase subunit I (180 aa).

2 4Fe-4S ferredoxin-type domains span residues 50–80 (LTRD…LQKA) and 90–119 (EFFR…LTPD). The [4Fe-4S] cluster site is built by cysteine 60, cysteine 63, cysteine 66, cysteine 70, cysteine 99, cysteine 102, cysteine 105, and cysteine 109.

This sequence belongs to the complex I 23 kDa subunit family. As to quaternary structure, NDH-1 is composed of 13 different subunits. Subunits NuoA, H, J, K, L, M, N constitute the membrane sector of the complex. [4Fe-4S] cluster is required as a cofactor.

The protein localises to the cell inner membrane. It carries out the reaction a quinone + NADH + 5 H(+)(in) = a quinol + NAD(+) + 4 H(+)(out). In terms of biological role, NDH-1 shuttles electrons from NADH, via FMN and iron-sulfur (Fe-S) centers, to quinones in the respiratory chain. The immediate electron acceptor for the enzyme in this species is believed to be ubiquinone. Couples the redox reaction to proton translocation (for every two electrons transferred, four hydrogen ions are translocated across the cytoplasmic membrane), and thus conserves the redox energy in a proton gradient. In Shigella sonnei (strain Ss046), this protein is NADH-quinone oxidoreductase subunit I.